The following is a 221-amino-acid chain: MNKGQYFWNELWCEGRISFHKEEVNPDLIAYISSLNIPAKGRVLVPLCGKSVDMLWLVRQGYHVVGIELVEKAILQFVQEHQITVRENTTGQAKQYFTDNLNLWITDIFALNAALIEPVDAIYDRAALVALPKKLRPAYVDICLKWLKPGGSILLKTLQYNQEKVQGPPYSVSPEEIALSYQQCAKIELLKSQKRIREPNDHLFNLGISEVNDYVWRIRKG.

The S-adenosyl-L-methionine site is built by W12, L47, E68, and R125.

Belongs to the class I-like SAM-binding methyltransferase superfamily. TPMT family.

It is found in the cytoplasm. It carries out the reaction S-adenosyl-L-methionine + a thiopurine = S-adenosyl-L-homocysteine + a thiopurine S-methylether.. The sequence is that of Thiopurine S-methyltransferase from Legionella pneumophila subsp. pneumophila (strain Philadelphia 1 / ATCC 33152 / DSM 7513).